Reading from the N-terminus, the 361-residue chain is MSFNTFGHMFRVTTFGESHGVAIGCVVDGCPPLIPLTEADIQGDLDRRRPGQSRFTTQRQEADQVKILSGVMAHPETGVQVTTGTPIALLIENTDQRSKDYSEIQNKFRPGHADFTYEAKYGIRDYRGGGRSSARETATRVAAGAVARKVIAGMTVRGALVQIGPHQIDRDKWDWAEIGNNPFFCPDKDKAAFFADYLDGIRKSGSSIGAVIEVVAEGVPAGLGAPIYAKLDTDLAAALMSINAVKGVEIGDGFATAALTGEENADEMRMGNAGPQFLSNHAGGILGGISTGQPVVARFAVKPTSSILSPRKTIDRAGHDTDILTKGRHDPCVGIRAVPVGEAMVACVLADHLLRHRGQVG.

Residues R48 and R54 each coordinate NADP(+). FMN contacts are provided by residues R131–S133, N243–A244, G287, K302–S306, and R328.

It belongs to the chorismate synthase family. Homotetramer. FMNH2 serves as cofactor.

The enzyme catalyses 5-O-(1-carboxyvinyl)-3-phosphoshikimate = chorismate + phosphate. It functions in the pathway metabolic intermediate biosynthesis; chorismate biosynthesis; chorismate from D-erythrose 4-phosphate and phosphoenolpyruvate: step 7/7. Its function is as follows. Catalyzes the anti-1,4-elimination of the C-3 phosphate and the C-6 proR hydrogen from 5-enolpyruvylshikimate-3-phosphate (EPSP) to yield chorismate, which is the branch point compound that serves as the starting substrate for the three terminal pathways of aromatic amino acid biosynthesis. This reaction introduces a second double bond into the aromatic ring system. The polypeptide is Chorismate synthase (Rhodopseudomonas palustris (strain HaA2)).